We begin with the raw amino-acid sequence, 197 residues long: Imidazoleglycerol-phosphate dehydratase (197 aa).

This sequence belongs to the imidazoleglycerol-phosphate dehydratase family.

The protein localises to the cytoplasm. It catalyses the reaction D-erythro-1-(imidazol-4-yl)glycerol 3-phosphate = 3-(imidazol-4-yl)-2-oxopropyl phosphate + H2O. It functions in the pathway amino-acid biosynthesis; L-histidine biosynthesis; L-histidine from 5-phospho-alpha-D-ribose 1-diphosphate: step 6/9. The polypeptide is Imidazoleglycerol-phosphate dehydratase (Syntrophus aciditrophicus (strain SB)).